A 150-amino-acid chain; its full sequence is Ribosomal RNA large subunit methyltransferase H (150 aa).

S-adenosyl-L-methionine is bound by residues L71, G100, and 118 to 123; that span reads FSQMTF.

It belongs to the RNA methyltransferase RlmH family. As to quaternary structure, homodimer.

The protein localises to the cytoplasm. The catalysed reaction is pseudouridine(1915) in 23S rRNA + S-adenosyl-L-methionine = N(3)-methylpseudouridine(1915) in 23S rRNA + S-adenosyl-L-homocysteine + H(+). Functionally, specifically methylates the pseudouridine at position 1915 (m3Psi1915) in 23S rRNA. The sequence is that of Ribosomal RNA large subunit methyltransferase H from Mycoplasmopsis agalactiae (strain NCTC 10123 / CIP 59.7 / PG2) (Mycoplasma agalactiae).